The primary structure comprises 567 residues: MGYDEAIIHLGDFGRYQKIIYFLICLTSIPVAFHKLAGVFLLAKPDFRCALPFENGSSYDLPTHLWNLSYPENERCSYYDVDYTEEYLNGSIPRSSNETKTCSSYVYDRSKYLNSAVTEWNLVCGRDFMAATSDSLFMLGVLLGSIVFGQLSDKYGRKPILFASLVIQVLFGVLAGVAPEYFTYTFARLMVGATTSGVFLVAYVVAMEMVGPDKRLYAGIFVMMFFSVGFMLTAVFAYFVHDWRWLQIALTLPGLIFMFYYWIIPESARWLLLKGRKDCAIANMQKAARFNKVEISDEALSELLDEGENSEEKAKQKLEDQELDEGPPPSVWDLFCYPNLRRKTLLIFLDWLVTSGVYYGLSWNTSNLGGNVLLNFVISGAVEIPAYIFLLLTLNRWGRRSILCGCLVMAGLSLLATVIIPQRMHTLIVACAMLGKLAITASYGTVYIFSAEQFPTVVRNVALGAASMVARISGMMAPFLNFLATIWKPLPLLICGSLTLVAGLLSLLLPETHNKPMLETIADGERFGKKTKADVYLETGQELRAPEAQPLKGSGETNGSTIANGHK.

The Cytoplasmic portion of the chain corresponds to 1–21; it reads MGYDEAIIHLGDFGRYQKIIY. The chain crosses the membrane as a helical span at residues 22–42; that stretch reads FLICLTSIPVAFHKLAGVFLL. Residues 43 to 127 are Extracellular-facing; the sequence is AKPDFRCALP…TEWNLVCGRD (85 aa). 4 N-linked (GlcNAc...) asparagine glycosylation sites follow: asparagine 55, asparagine 67, asparagine 89, and asparagine 97. Residues 128–148 traverse the membrane as a helical segment; sequence FMAATSDSLFMLGVLLGSIVF. The Cytoplasmic portion of the chain corresponds to 149 to 158; sequence GQLSDKYGRK. A helical membrane pass occupies residues 159–179; sequence PILFASLVIQVLFGVLAGVAP. Residues 180-189 lie on the Extracellular side of the membrane; the sequence is EYFTYTFARL. Residues 190–210 traverse the membrane as a helical segment; it reads MVGATTSGVFLVAYVVAMEMV. Over 211–219 the chain is Cytoplasmic; it reads GPDKRLYAG. A helical transmembrane segment spans residues 220–240; sequence IFVMMFFSVGFMLTAVFAYFV. Residues 241-244 are Extracellular-facing; it reads HDWR. Residues 245–265 form a helical membrane-spanning segment; that stretch reads WLQIALTLPGLIFMFYYWIIP. The Cytoplasmic segment spans residues 266–343; the sequence is ESARWLLLKG…LFCYPNLRRK (78 aa). Residues 304–326 are disordered; sequence LDEGENSEEKAKQKLEDQELDEG. Residues 310-320 show a composition bias toward basic and acidic residues; sequence SEEKAKQKLED. The helical transmembrane segment at 344 to 364 threads the bilayer; sequence TLLIFLDWLVTSGVYYGLSWN. The Extracellular segment spans residues 365–371; the sequence is TSNLGGN. A helical transmembrane segment spans residues 372–392; that stretch reads VLLNFVISGAVEIPAYIFLLL. At 393 to 400 the chain is on the cytoplasmic side; the sequence is TLNRWGRR. The chain crosses the membrane as a helical span at residues 401–421; that stretch reads SILCGCLVMAGLSLLATVIIP. Topologically, residues 422–427 are extracellular; it reads QRMHTL. A helical transmembrane segment spans residues 428 to 448; sequence IVACAMLGKLAITASYGTVYI. Residues 449-462 lie on the Cytoplasmic side of the membrane; the sequence is FSAEQFPTVVRNVA. Residues 463–483 form a helical membrane-spanning segment; that stretch reads LGAASMVARISGMMAPFLNFL. Residues 484 to 489 lie on the Extracellular side of the membrane; the sequence is ATIWKP. Residues 490-510 form a helical membrane-spanning segment; sequence LPLLICGSLTLVAGLLSLLLP. At 511–567 the chain is on the cytoplasmic side; that stretch reads ETHNKPMLETIADGERFGKKTKADVYLETGQELRAPEAQPLKGSGETNGSTIANGHK. The disordered stretch occupies residues 546 to 567; sequence PEAQPLKGSGETNGSTIANGHK. The segment covering 555–567 has biased composition (polar residues); sequence GETNGSTIANGHK.

Belongs to the major facilitator (TC 2.A.1) superfamily. Organic cation transporter (TC 2.A.1.19) family.

Its subcellular location is the membrane. Its function is as follows. Probably transports organic cations. This chain is Organic cation transporter-like protein (Orct2), found in Drosophila melanogaster (Fruit fly).